We begin with the raw amino-acid sequence, 380 residues long: Anhydro-N-acetylmuramic acid kinase (380 aa).

9-16 (GTSVDGID) is a binding site for ATP.

The protein belongs to the anhydro-N-acetylmuramic acid kinase family.

The enzyme catalyses 1,6-anhydro-N-acetyl-beta-muramate + ATP + H2O = N-acetyl-D-muramate 6-phosphate + ADP + H(+). It functions in the pathway amino-sugar metabolism; 1,6-anhydro-N-acetylmuramate degradation. The protein operates within cell wall biogenesis; peptidoglycan recycling. Functionally, catalyzes the specific phosphorylation of 1,6-anhydro-N-acetylmuramic acid (anhMurNAc) with the simultaneous cleavage of the 1,6-anhydro ring, generating MurNAc-6-P. Is required for the utilization of anhMurNAc either imported from the medium or derived from its own cell wall murein, and thus plays a role in cell wall recycling. The protein is Anhydro-N-acetylmuramic acid kinase of Cyanothece sp. (strain PCC 7425 / ATCC 29141).